Here is a 470-residue protein sequence, read N- to C-terminus: Probable G-protein coupled receptor 152 (470 aa).

The disordered stretch occupies residues methionine 1–serine 25. Residues methionine 1–threonine 33 lie on the Extracellular side of the membrane. A helical transmembrane segment spans residues valine 34–alanine 54. The Cytoplasmic portion of the chain corresponds to glycine 55–arginine 65. A helical transmembrane segment spans residues leucine 66–phenylalanine 86. Residues glutamine 87 to arginine 105 are Extracellular-facing. A disulfide bridge connects residues cysteine 104 and cysteine 182. Residues phenylalanine 106–serine 126 form a helical membrane-spanning segment. Topologically, residues leucine 127–proline 148 are cytoplasmic. The helical transmembrane segment at leucine 149–phenylalanine 169 threads the bilayer. Over proline 170–arginine 194 the chain is Extracellular. A helical membrane pass occupies residues methionine 195–threonine 215. The Cytoplasmic portion of the chain corresponds to glutamine 216–glutamine 257. The helical transmembrane segment at leucine 258–valine 278 threads the bilayer. Over tyrosine 279 to aspartate 281 the chain is Extracellular. Residues tyrosine 282–leucine 302 form a helical membrane-spanning segment. Residues arginine 303–threonine 470 are Cytoplasmic-facing. The disordered stretch occupies residues proline 322–threonine 470. Polar residues-rich tracts occupy residues phenylalanine 325–aspartate 335 and alanine 348–threonine 414. Residues proline 415 to proline 425 show a composition bias toward low complexity.

Belongs to the G-protein coupled receptor 1 family.

It is found in the cell membrane. Its function is as follows. Orphan receptor. The protein is Probable G-protein coupled receptor 152 (GPR152) of Homo sapiens (Human).